The sequence spans 213 residues: Negative modulator of initiation of replication (213 aa).

3 interaction with DNA regions span residues 116–117 (AV), 145–149 (RTRVY), and 179–185 (NTNSGRK).

It belongs to the SeqA family. In terms of assembly, homodimer. Polymerizes to form helical filaments.

It is found in the cytoplasm. Functionally, negative regulator of replication initiation, which contributes to regulation of DNA replication and ensures that replication initiation occurs exactly once per chromosome per cell cycle. Binds to pairs of hemimethylated GATC sequences in the oriC region, thus preventing assembly of replication proteins and re-initiation at newly replicated origins. Repression is relieved when the region becomes fully methylated. The chain is Negative modulator of initiation of replication from Haemophilus parainfluenzae (strain T3T1).